Consider the following 248-residue polypeptide: 5'-nucleotidase SurE (248 aa).

The a divalent metal cation site is built by Asp-8, Asp-9, Ser-39, and Asn-92.

This sequence belongs to the SurE nucleotidase family. It depends on a divalent metal cation as a cofactor.

It is found in the cytoplasm. It carries out the reaction a ribonucleoside 5'-phosphate + H2O = a ribonucleoside + phosphate. Functionally, nucleotidase that shows phosphatase activity on nucleoside 5'-monophosphates. The protein is 5'-nucleotidase SurE of Tolumonas auensis (strain DSM 9187 / NBRC 110442 / TA 4).